The following is a 100-amino-acid chain: NADH-quinone oxidoreductase subunit K 2 (100 aa).

Transmembrane regions (helical) follow at residues 2–22 (LAIENYLILSAILFSIGTIGV), 29–49 (IVIFMCIEMMLNAVNLTFIAF), and 61–81 (FVFFVMTVAAAEAAVGLALMI).

This sequence belongs to the complex I subunit 4L family. In terms of assembly, NDH-1 is composed of 14 different subunits. Subunits NuoA, H, J, K, L, M, N constitute the membrane sector of the complex.

The protein localises to the cell inner membrane. It carries out the reaction a quinone + NADH + 5 H(+)(in) = a quinol + NAD(+) + 4 H(+)(out). In terms of biological role, NDH-1 shuttles electrons from NADH, via FMN and iron-sulfur (Fe-S) centers, to quinones in the respiratory chain. The immediate electron acceptor for the enzyme in this species is believed to be ubiquinone. Couples the redox reaction to proton translocation (for every two electrons transferred, four hydrogen ions are translocated across the cytoplasmic membrane), and thus conserves the redox energy in a proton gradient. This Citrifermentans bemidjiense (strain ATCC BAA-1014 / DSM 16622 / JCM 12645 / Bem) (Geobacter bemidjiensis) protein is NADH-quinone oxidoreductase subunit K 2.